We begin with the raw amino-acid sequence, 366 residues long: Holliday junction branch migration complex subunit RuvB (366 aa).

The tract at residues 3–183 (ADGLVSAAAS…FGFTAHLDFY (181 aa)) is large ATPase domain (RuvB-L). Residues Leu-22, Arg-23, Gly-64, Lys-67, Thr-68, Ser-69, 130–132 (EDF), Arg-173, Tyr-183, and Arg-220 each bind ATP. Mg(2+) is bound at residue Thr-68. Residues 184 to 254 (APDELARVLT…VARAALRIYD (71 aa)) form a small ATPAse domain (RuvB-S) region. The head domain (RuvB-H) stretch occupies residues 257–366 (GLGLDRLDRA…PEDGLHPGGG (110 aa)). Positions 312 and 317 each coordinate DNA.

This sequence belongs to the RuvB family. Homohexamer. Forms an RuvA(8)-RuvB(12)-Holliday junction (HJ) complex. HJ DNA is sandwiched between 2 RuvA tetramers; dsDNA enters through RuvA and exits via RuvB. An RuvB hexamer assembles on each DNA strand where it exits the tetramer. Each RuvB hexamer is contacted by two RuvA subunits (via domain III) on 2 adjacent RuvB subunits; this complex drives branch migration. In the full resolvosome a probable DNA-RuvA(4)-RuvB(12)-RuvC(2) complex forms which resolves the HJ.

It localises to the cytoplasm. It carries out the reaction ATP + H2O = ADP + phosphate + H(+). Its function is as follows. The RuvA-RuvB-RuvC complex processes Holliday junction (HJ) DNA during genetic recombination and DNA repair, while the RuvA-RuvB complex plays an important role in the rescue of blocked DNA replication forks via replication fork reversal (RFR). RuvA specifically binds to HJ cruciform DNA, conferring on it an open structure. The RuvB hexamer acts as an ATP-dependent pump, pulling dsDNA into and through the RuvAB complex. RuvB forms 2 homohexamers on either side of HJ DNA bound by 1 or 2 RuvA tetramers; 4 subunits per hexamer contact DNA at a time. Coordinated motions by a converter formed by DNA-disengaged RuvB subunits stimulates ATP hydrolysis and nucleotide exchange. Immobilization of the converter enables RuvB to convert the ATP-contained energy into a lever motion, pulling 2 nucleotides of DNA out of the RuvA tetramer per ATP hydrolyzed, thus driving DNA branch migration. The RuvB motors rotate together with the DNA substrate, which together with the progressing nucleotide cycle form the mechanistic basis for DNA recombination by continuous HJ branch migration. Branch migration allows RuvC to scan DNA until it finds its consensus sequence, where it cleaves and resolves cruciform DNA. In Frankia alni (strain DSM 45986 / CECT 9034 / ACN14a), this protein is Holliday junction branch migration complex subunit RuvB.